A 445-amino-acid polypeptide reads, in one-letter code: Phosphoglucosamine mutase (445 aa).

S99 serves as the catalytic Phosphoserine intermediate. 4 residues coordinate Mg(2+): S99, D242, D244, and D246. S99 is subject to Phosphoserine.

The protein belongs to the phosphohexose mutase family. The cofactor is Mg(2+). Post-translationally, activated by phosphorylation.

It catalyses the reaction alpha-D-glucosamine 1-phosphate = D-glucosamine 6-phosphate. Functionally, catalyzes the conversion of glucosamine-6-phosphate to glucosamine-1-phosphate. The protein is Phosphoglucosamine mutase of Helicobacter pylori (strain Shi470).